Reading from the N-terminus, the 1448-residue chain is ABC transporter G family member 9 (1448 aa).

The segment covering glutamate 16–glycine 28 has biased composition (polar residues). Residues glutamate 16 to proline 41 are disordered. The ABC transporter 1 domain maps to leucine 136–proline 385. One can recognise an ABC transmembrane type-2 1 domain in the interval tryptophan 490 to cysteine 717. Helical transmembrane passes span phenylalanine 494 to phenylalanine 514, alanine 530 to phenylalanine 550, isoleucine 579 to leucine 599, glycine 604 to phenylalanine 624, leucine 634 to tyrosine 654, proline 663 to alanine 683, and leucine 748 to valine 768. Residues phenylalanine 822–valine 1066 enclose the ABC transporter 2 domain. Position 858–865 (glycine 858–threonine 865) interacts with ATP. Transmembrane regions (helical) follow at residues phenylalanine 1157 to phenylalanine 1177, isoleucine 1191 to glutamine 1211, phenylalanine 1233 to phenylalanine 1253, phenylalanine 1272 to isoleucine 1292, methionine 1299 to valine 1319, and isoleucine 1422 to leucine 1442. The ABC transmembrane type-2 2 domain occupies phenylalanine 1157–threonine 1389.

This sequence belongs to the ABC transporter superfamily. ABCG family. PDR (TC 3.A.1.205) subfamily.

It localises to the membrane. The protein is ABC transporter G family member 9 (abcG9) of Dictyostelium discoideum (Social amoeba).